The chain runs to 369 residues: Anhydro-N-acetylmuramic acid kinase (369 aa).

Residue 12–19 participates in ATP binding; sequence GTSMDGVD.

Belongs to the anhydro-N-acetylmuramic acid kinase family.

The catalysed reaction is 1,6-anhydro-N-acetyl-beta-muramate + ATP + H2O = N-acetyl-D-muramate 6-phosphate + ADP + H(+). The protein operates within amino-sugar metabolism; 1,6-anhydro-N-acetylmuramate degradation. It participates in cell wall biogenesis; peptidoglycan recycling. Catalyzes the specific phosphorylation of 1,6-anhydro-N-acetylmuramic acid (anhMurNAc) with the simultaneous cleavage of the 1,6-anhydro ring, generating MurNAc-6-P. Is required for the utilization of anhMurNAc either imported from the medium or derived from its own cell wall murein, and thus plays a role in cell wall recycling. The protein is Anhydro-N-acetylmuramic acid kinase of Shewanella halifaxensis (strain HAW-EB4).